We begin with the raw amino-acid sequence, 345 residues long: Erythronate-4-phosphate dehydrogenase (345 aa).

Ser45 contributes to the substrate binding site. 2 residues coordinate NAD(+): Asp146 and Thr174. The active site involves Arg207. Residue Asp227 coordinates NAD(+). Glu232 is an active-site residue. The active-site Proton donor is the His249. Gly252 is a binding site for NAD(+).

Belongs to the D-isomer specific 2-hydroxyacid dehydrogenase family. PdxB subfamily. In terms of assembly, homodimer.

Its subcellular location is the cytoplasm. The catalysed reaction is 4-phospho-D-erythronate + NAD(+) = (R)-3-hydroxy-2-oxo-4-phosphooxybutanoate + NADH + H(+). Its pathway is cofactor biosynthesis; pyridoxine 5'-phosphate biosynthesis; pyridoxine 5'-phosphate from D-erythrose 4-phosphate: step 2/5. Its function is as follows. Catalyzes the oxidation of erythronate-4-phosphate to 3-hydroxy-2-oxo-4-phosphonooxybutanoate. The sequence is that of Erythronate-4-phosphate dehydrogenase from Ruthia magnifica subsp. Calyptogena magnifica.